Consider the following 94-residue polypeptide: MSIDFVVHDADDAVGVVVVEGVEAGQMLTGWVMDQDRTLQFEVKDAIPIGHKLAIRDLAEDETVIKYSVDIGRVVQSIRQGEHVHVHNVKTKRW.

Positions valine 16 to lysine 90 constitute an AFP-like domain.

As to quaternary structure, (2R)-sulfolactate sulfo-lyase is composed of a SuyA and a SuyB subunit.

The protein localises to the cytoplasm. It catalyses the reaction (2R)-3-sulfolactate = sulfite + pyruvate + H(+). Functionally, together with SuyB, desulfonates sulfolactate to pyruvate and sulfite. The protein is (2R)-sulfolactate sulfo-lyase subunit alpha (suyA) of Chromohalobacter salexigens (strain ATCC BAA-138 / DSM 3043 / CIP 106854 / NCIMB 13768 / 1H11).